Here is a 751-residue protein sequence, read N- to C-terminus: MHTGGETSACKPSSVRLAPSFSFHAAGLQMAGQMSHSHQQYSDRRQQNLNDQQASALPYNDQIQQPLPNQRRMPQTFRDPATAPLRKLSVDLIKTYKHINEVYYAKKKRRHQQGQGDDSSHKKERKVYNDGYDDDNYDYIVKNGEKWMDRYEIDSLIGKGSFGQVVKAYDRAEQEWVAIKIIKNKKAFLNQAQIEVRLLELMNKHDTEMKYYIVHLKRHFMFRNHLCLVFEMLSYNLYDLLRNTNFRGVSLNLTRKFAQQMCTALLFLATPELSIIHCDLKPENILLCNPKRSAIKIVDFGSSCQLGQRIYQYIQSRFYRSPEVLLGMPYDLAIDMWSLGCILVEMHTGEPLFSGANEVDQMSKIVEVLGIPPAHILDQAPKARKFFEKMPEGTWNLKKTKDGKKEYKPPGTRKLHNLLGVETGGPGGRRGGESGHTVADYLKFKDLILRMLDYDAKTRIQPYYALQHSFFKKTADEGTNTSNSVSTSPAMEQSQSSGTTSSTSSSSGGSSGTSNSGRARSDPTHQHRHSGGHFTAAVQAMDCETHSPQVRQQFPPGWTVPEAPTQVTIETHPVQETTFHVPSSQQNVPHHHGNGSHHHHHHHHHHHGQHVLSNRTRTRIYNSPSTSSSTQDSMDVGHSHHSMTSLSSSTTSSSTSSSSTGNQGNQAYQNRPVAANTLDFGQNGTMDVNLTAFSNPRQETGITGHPDYQYSANTGPGHYVTEGHLTMRQGMDREDSPMTGVCVQQSPVASS.

Over residues 59-68 (YNDQIQQPLP) the composition is skewed to polar residues. 2 disordered regions span residues 59-81 (YNDQ…RDPA) and 104-129 (YAKK…KVYN). A Bipartite nuclear localization signal motif is present at residues 109–126 (RRHQQGQGDDSSHKKERK). Residues 151-471 (YEIDSLIGKG…PYYALQHSFF (321 aa)) form the Protein kinase domain. Residues 157 to 165 (IGKGSFGQV), Lys-180, and 230 to 233 (FEML) contribute to the ATP site. Asp-279 (proton acceptor) is an active-site residue. The segment covering 477–493 (EGTNTSNSVSTSPAMEQ) has biased composition (polar residues). Disordered stretches follow at residues 477-532 (EGTN…HSGG), 580-667 (HVPS…GNQA), and 730-751 (GMDR…VASS). Residues 494–517 (SQSSGTTSSTSSSSGGSSGTSNSG) show a composition bias toward low complexity. A histidine-rich domain (HRD) region spans residues 585-613 (QQNVPHHHGNGSHHHHHHHHHHHGQHVLS). Over residues 589–609 (PHHHGNGSHHHHHHHHHHHGQ) the composition is skewed to basic residues. Positions 611–622 (VLSNRTRTRIYN) are enriched in polar residues. Low complexity-rich tracts occupy residues 623-633 (SPSTSSSTQDS) and 642-660 (SMTS…SSST). Residues 742–751 (CVQQSPVASS) show a composition bias toward polar residues.

This sequence belongs to the protein kinase superfamily. CMGC Ser/Thr protein kinase family. MNB/DYRK subfamily. Autophosphorylated on tyrosine residues.

The protein resides in the nucleus. The protein localises to the nucleus speckle. The enzyme catalyses L-seryl-[protein] + ATP = O-phospho-L-seryl-[protein] + ADP + H(+). It carries out the reaction L-threonyl-[protein] + ATP = O-phospho-L-threonyl-[protein] + ADP + H(+). It catalyses the reaction L-tyrosyl-[protein] + ATP = O-phospho-L-tyrosyl-[protein] + ADP + H(+). The catalysed reaction is [DNA-directed RNA polymerase] + ATP = phospho-[DNA-directed RNA polymerase] + ADP + H(+). Dual-specificity kinase which possesses both serine/threonine and tyrosine kinase activities. Exhibits a substrate preference for proline at position P+1 and arginine at position P-3. Plays an important role in double-strand breaks (DSBs) repair following DNA damage. Mechanistically, phosphorylates RNF169 and increases its ability to block accumulation of TP53BP1 at the DSB sites thereby promoting homologous recombination repair (HRR). Also acts as a positive regulator of transcription by acting as a CTD kinase that mediates phosphorylation of the CTD (C-terminal domain) of the large subunit of RNA polymerase II (RNAP II) POLR2A. Modulates alternative splicing by phosphorylating the splice factor SRSF6. Phosphorylates SEPTIN4, SEPTIN5 and SF3B1. The polypeptide is Dual specificity tyrosine-phosphorylation-regulated kinase 1A (Xenopus tropicalis (Western clawed frog)).